We begin with the raw amino-acid sequence, 295 residues long: Tyrosine recombinase XerC (295 aa).

The 85-residue stretch at 1–85 (MLTALNRYWD…ALRRFLSFLV (85 aa)) folds into the Core-binding (CB) domain. The Tyr recombinase domain maps to 106–285 (HLPKNMDGEQ…NFQHLAEVYD (180 aa)). Residues Arg-145, Lys-169, His-237, Arg-240, and His-263 contribute to the active site. Residue Tyr-272 is the O-(3'-phospho-DNA)-tyrosine intermediate of the active site.

This sequence belongs to the 'phage' integrase family. XerC subfamily. In terms of assembly, forms a cyclic heterotetrameric complex composed of two molecules of XerC and two molecules of XerD.

It localises to the cytoplasm. Site-specific tyrosine recombinase, which acts by catalyzing the cutting and rejoining of the recombining DNA molecules. The XerC-XerD complex is essential to convert dimers of the bacterial chromosome into monomers to permit their segregation at cell division. It also contributes to the segregational stability of plasmids. The polypeptide is Tyrosine recombinase XerC (Haemophilus influenzae (strain 86-028NP)).